Consider the following 248-residue polypeptide: Probable transcriptional regulatory protein MYPE8020 (248 aa).

Belongs to the TACO1 family.

It is found in the cytoplasm. This Malacoplasma penetrans (strain HF-2) (Mycoplasma penetrans) protein is Probable transcriptional regulatory protein MYPE8020.